Consider the following 239-residue polypeptide: Pathogenesis-related protein 5 (239 aa).

The N-terminal stretch at 1–23 is a signal peptide; it reads MANISSIHILFLVFITSGIAVMA. 8 disulfides stabilise this stretch: cysteine 32–cysteine 238, cysteine 79–cysteine 89, cysteine 94–cysteine 99, cysteine 146–cysteine 228, cysteine 151–cysteine 211, cysteine 159–cysteine 174, cysteine 178–cysteine 187, and cysteine 188–cysteine 198.

This sequence belongs to the thaumatin family.

The protein localises to the secreted. The protein resides in the extracellular space. Its subcellular location is the apoplast. In terms of biological role, partially responsible for acquired pathogen resistance. This Arabidopsis thaliana (Mouse-ear cress) protein is Pathogenesis-related protein 5.